Consider the following 441-residue polypeptide: 23S rRNA (uracil(1939)-C(5))-methyltransferase RlmD (441 aa).

The 56-residue stretch at 1 to 56 (MSIDSLDMEARGVGRLLNEDGTPGKVIFVEGALPGETVSYRSFRRKPSYEQAHLVE) folds into the TRAM domain. [4Fe-4S] cluster-binding residues include Cys69, Cys75, Cys78, and Cys157. S-adenosyl-L-methionine-binding residues include Gln265, Phe294, Asn299, Glu315, Asn343, and Asp364. Cys397 serves as the catalytic Nucleophile.

It belongs to the class I-like SAM-binding methyltransferase superfamily. RNA M5U methyltransferase family. RlmD subfamily.

The catalysed reaction is uridine(1939) in 23S rRNA + S-adenosyl-L-methionine = 5-methyluridine(1939) in 23S rRNA + S-adenosyl-L-homocysteine + H(+). In terms of biological role, catalyzes the formation of 5-methyl-uridine at position 1939 (m5U1939) in 23S rRNA. The protein is 23S rRNA (uracil(1939)-C(5))-methyltransferase RlmD of Cupriavidus necator (strain ATCC 17699 / DSM 428 / KCTC 22496 / NCIMB 10442 / H16 / Stanier 337) (Ralstonia eutropha).